The sequence spans 217 residues: Pyridoxine/pyridoxamine 5'-phosphate oxidase (217 aa).

Residues 66-71 (RMVLLK), 81-82 (FT), R87, K88, and Q110 each bind FMN. K71 provides a ligand contact to substrate. Substrate is bound by residues Y128, R132, and S136. Residues 145–146 (QS) and W190 each bind FMN. Position 196-198 (196-198 (RLH)) interacts with substrate. R200 contributes to the FMN binding site.

Belongs to the pyridoxamine 5'-phosphate oxidase family. As to quaternary structure, homodimer. It depends on FMN as a cofactor.

It catalyses the reaction pyridoxamine 5'-phosphate + O2 + H2O = pyridoxal 5'-phosphate + H2O2 + NH4(+). The catalysed reaction is pyridoxine 5'-phosphate + O2 = pyridoxal 5'-phosphate + H2O2. It functions in the pathway cofactor metabolism; pyridoxal 5'-phosphate salvage; pyridoxal 5'-phosphate from pyridoxamine 5'-phosphate: step 1/1. Its pathway is cofactor metabolism; pyridoxal 5'-phosphate salvage; pyridoxal 5'-phosphate from pyridoxine 5'-phosphate: step 1/1. Catalyzes the oxidation of either pyridoxine 5'-phosphate (PNP) or pyridoxamine 5'-phosphate (PMP) into pyridoxal 5'-phosphate (PLP). The polypeptide is Pyridoxine/pyridoxamine 5'-phosphate oxidase (Colwellia psychrerythraea (strain 34H / ATCC BAA-681) (Vibrio psychroerythus)).